The primary structure comprises 527 residues: Glutamyl-tRNA reductase 1, chloroplastic (527 aa).

A chloroplast-targeting transit peptide spans 1-43 (MAGATSATAAAGAFAAAKARGPAAACPWLVAAGGRRRSGVVRC). Residues 124–127 (TCNR), serine 184, 189–191 (EGQ), and glutamine 195 contribute to the substrate site. The active-site Nucleophile is the cysteine 125. 266-271 (GAGKMG) is an NADP(+) binding site.

This sequence belongs to the glutamyl-tRNA reductase family. In terms of assembly, homodimer.

The protein resides in the plastid. It localises to the chloroplast. The catalysed reaction is (S)-4-amino-5-oxopentanoate + tRNA(Glu) + NADP(+) = L-glutamyl-tRNA(Glu) + NADPH + H(+). Its pathway is porphyrin-containing compound metabolism; protoporphyrin-IX biosynthesis; 5-aminolevulinate from L-glutamyl-tRNA(Glu): step 1/2. Its function is as follows. Catalyzes the NADPH-dependent reduction of glutamyl-tRNA(Glu) to glutamate 1-semialdehyde (GSA). In Hordeum vulgare (Barley), this protein is Glutamyl-tRNA reductase 1, chloroplastic (HEMA1).